The following is a 254-amino-acid chain: 3-oxo-5-alpha-steroid 4-dehydrogenase 2 (254 aa).

A run of 4 helical transmembrane segments spans residues Ser-8–Ala-28, Pro-72–Phe-92, Phe-146–Ile-166, and Leu-206–Leu-226.

This sequence belongs to the steroid 5-alpha reductase family.

Its subcellular location is the microsome membrane. It is found in the endoplasmic reticulum membrane. The enzyme catalyses a 3-oxo-5alpha-steroid + NADP(+) = a 3-oxo-Delta(4)-steroid + NADPH + H(+). It carries out the reaction 17beta-hydroxy-5alpha-androstan-3-one + NADP(+) = testosterone + NADPH + H(+). The catalysed reaction is 5alpha-pregnane-3,20-dione + NADP(+) = progesterone + NADPH + H(+). Converts testosterone (T) into 5-alpha-dihydrotestosterone (DHT) and progesterone or corticosterone into their corresponding 5-alpha-3-oxosteroids. It plays a central role in sexual differentiation and androgen physiology. This Macaca fascicularis (Crab-eating macaque) protein is 3-oxo-5-alpha-steroid 4-dehydrogenase 2 (SRD5A2).